A 601-amino-acid polypeptide reads, in one-letter code: RNA polymerase II C-terminal domain phosphatase-like 5 (601 aa).

Residues 1 to 20 form a disordered region; the sequence is MFVAKNLSPERESKRQKKEP. The span at 8–20 shows a compositional bias: basic and acidic residues; it reads SPERESKRQKKEP. FCP1 homology domains lie at 84–259 and 381–553; these read LNMK…TDES and LNEK…DESE.

In terms of tissue distribution, expressed in roots, seedlings, hypocotyls, cotyledons, leaves, siliques and flowers.

It is found in the nucleus. It carries out the reaction O-phospho-L-seryl-[protein] + H2O = L-seryl-[protein] + phosphate. The catalysed reaction is O-phospho-L-threonyl-[protein] + H2O = L-threonyl-[protein] + phosphate. Its function is as follows. Mediates the dephosphorylation of 'Ser-2' of the heptad repeats YSPTSPS in the C-terminal domain of the largest RNA polymerase II subunit (RPB1). This promotes the activity of RNA polymerase II. Positively regulates abscisic acid (ABA) and drought responses, including the regulation of specific genes expression. This Arabidopsis thaliana (Mouse-ear cress) protein is RNA polymerase II C-terminal domain phosphatase-like 5.